A 631-amino-acid polypeptide reads, in one-letter code: Origin recognition complex subunit 1 (631 aa).

2 stretches are compositionally biased toward low complexity: residues 1–14 (MTDE…YPPI) and 22–37 (KLNN…NNNH). A disordered region spans residues 1–164 (MTDESSSSIS…EEEDEEGKFN (164 aa)). Positions 55–80 (DNEKIGFSDPENEKINKHKASFKDSN) are enriched in basic and acidic residues. Over residues 91–104 (EDTDDDDYEDEDED) the composition is skewed to acidic residues. A compositionally biased stretch (basic and acidic residues) spans 105–133 (ENHKIKDESDNSEDFNNHTKNTTDLDEGF). A compositionally biased stretch (acidic residues) spans 141–160 (ESEEEEEEEEYEEEEEEDEE). ATP contacts are provided by residues Val230 and 265-273 (GMPGTGKTA). Mg(2+) contacts are provided by Asp361 and Glu362. The ATP site is built by Glu362, Asn395, and Arg460.

Belongs to the ORC1 family. ORC is composed of six subunits.

The protein resides in the nucleus. Functionally, component of the origin recognition complex (ORC) that binds origins of replication. DNA-binding is ATP-dependent, however specific DNA sequences that define origins of replication have not been identified so far. ORC is required to assemble the pre-replication complex necessary to initiate DNA replication. This is Origin recognition complex subunit 1 (orcA) from Dictyostelium discoideum (Social amoeba).